Reading from the N-terminus, the 221-residue chain is Thyrotroph embryonic factor (221 aa).

The segment at 72–116 (ESASSSTASPPSSSTAVFQPSETVSSTESSLEKERETPSPIDPNC) is disordered. The segment covering 73–100 (SASSSTASPPSSSTAVFQPSETVSSTES) has biased composition (low complexity). One can recognise a bZIP domain in the interval 173 to 221 (DEKYWTRRKKNNVAAKRSRDARRLKENQITIRAAFLEKENTALRTEVAD). The tract at residues 175 to 195 (KYWTRRKKNNVAAKRSRDARR) is basic motif. The leucine-zipper stretch occupies residues 196–203 (LKENQITI).

This sequence belongs to the bZIP family. PAR subfamily. As to quaternary structure, binds DNA as a homodimer or a heterodimer. Can form a heterodimer with DBP.

It is found in the nucleus. In terms of biological role, transcription factor that binds to and transactivates the TSHB promoter. Binds to a minimal DNA-binding sequence 5'-[TC][AG][AG]TTA[TC][AG]-3'. This is Thyrotroph embryonic factor (TEF) from Phodopus sungorus (Striped hairy-footed hamster).